Consider the following 119-residue polypeptide: MPPKKDTKASAKQPQKTQKKKEGSGGGKAKKKKWSKGKVRDKLNNQVLFDKPTYEKLYKEVPQYKLITPAVVSERLKVRGSLARRALIELREKGLIKQVVQHHGQVIYTRATKGDDPVA.

A disordered region spans residues 1–42 (MPPKKDTKASAKQPQKTQKKKEGSGGGKAKKKKWSKGKVRDK). The span at 28 to 37 (KAKKKKWSKG) shows a compositional bias: basic residues.

This sequence belongs to the eukaryotic ribosomal protein eS25 family.

In Spodoptera frugiperda (Fall armyworm), this protein is Small ribosomal subunit protein eS25 (RpS25).